The primary structure comprises 886 residues: DNA mismatch repair protein MutS (886 aa).

Residue 626–633 coordinates ATP; sequence GPNMGGKS.

The protein belongs to the DNA mismatch repair MutS family.

This protein is involved in the repair of mismatches in DNA. It is possible that it carries out the mismatch recognition step. This protein has a weak ATPase activity. The polypeptide is DNA mismatch repair protein MutS (Burkholderia ambifaria (strain ATCC BAA-244 / DSM 16087 / CCUG 44356 / LMG 19182 / AMMD) (Burkholderia cepacia (strain AMMD))).